The primary structure comprises 287 residues: Uroporphyrinogen-III C-methyltransferase (287 aa).

Residues 1-10 (MAGKTVTNGA) are compositionally biased toward polar residues. The interval 1–24 (MAGKTVTNGAAQGKAARSGADGAV) is disordered. Residues Pro40, 116 to 118 (GGD), Thr146, and Met199 each bind S-adenosyl-L-methionine.

Belongs to the precorrin methyltransferase family.

It carries out the reaction uroporphyrinogen III + 2 S-adenosyl-L-methionine = precorrin-2 + 2 S-adenosyl-L-homocysteine + H(+). It participates in porphyrin-containing compound metabolism; siroheme biosynthesis; precorrin-2 from uroporphyrinogen III: step 1/1. Its function is as follows. Catalyzes the methylation of both C-2 and C-7 of uroporphyrinogen III leading to precorrin-1 and precorrin-2; their oxidative esterification gives respectively factor I octamethyl ester and sirohydrochlorin. Inactivation of uroporphyrinogen-III methyltransferase results in the loss of nitrite and nitric oxide reductase activities, but not of nitrous oxide reductase activity. Likely involved in heme D1 biosynthesis. This chain is Uroporphyrinogen-III C-methyltransferase (nirE), found in Paracoccus denitrificans (strain Pd 1222).